The chain runs to 330 residues: 5'-AMP-activated protein kinase subunit gamma-1 (330 aa).

A disordered region spans residues 1 to 21 (MESVAAESSPALENEHFQETP). CBS domains follow at residues 42–102 (PTSS…KSAL), 124–186 (SFKP…PKPE), and 197–259 (IGTY…NLDV). ADP-binding positions include Arg69, 84–89 (MLTITD), Val129, 150–151 (HR), and Lys169. AMP-binding positions include Arg69, 84–89 (MLTITD), Val129, His150, 150–151 (HR), Lys169, Thr199, Ala204, 225–226 (SA), and 241–244 (SKFD). ATP-binding positions include Arg69, 84-89 (MLTITD), Val129, 150-151 (HR), Arg151, and Lys169. Positions 137-158 (LFDAVSSLIRNKIHRLPVIDPE) match the AMPK pseudosubstrate motif. 241–244 (SKFD) contributes to the ADP binding site. 241–244 (SKFD) contributes to the ATP binding site. The residue at position 260 (Ser260) is a Phosphoserine; by ULK1. Residue Thr262 is modified to Phosphothreonine; by ULK1. Arg268 serves as a coordination point for ADP. Arg268 contributes to the AMP binding site. ATP is bound at residue Arg268. Ser269 is subject to Phosphoserine; by ULK1. Positions 271 to 328 (YFEGVLKCYLHETLETIINRLVEAEVHRLVVVDEHDVVKGIVSLSDILQALVLTGGEK) constitute a CBS 4 domain. ADP-binding positions include Leu276 and 297 to 298 (HR). Residues Leu276, His297, 297–298 (HR), and 313–316 (SLSD) contribute to the AMP site. ATP-binding positions include Leu276 and 297–298 (HR).

The protein belongs to the 5'-AMP-activated protein kinase gamma subunit family. AMPK is a heterotrimer of an alpha catalytic subunit (PRKAA1 or PRKAA2), a beta (PRKAB1 or PRKAB2) and a gamma non-catalytic subunits (PRKAG1, PRKAG2 or PRKAG3). Interacts with FNIP1 and FNIP2. Phosphorylated by ULK1 and ULK2; leading to negatively regulate AMPK activity and suggesting the existence of a regulatory feedback loop between ULK1, ULK2 and AMPK. Post-translationally, glycosylated; O-GlcNAcylated by OGT, promoting the AMP-activated protein kinase (AMPK) activity.

Functionally, AMP/ATP-binding subunit of AMP-activated protein kinase (AMPK), an energy sensor protein kinase that plays a key role in regulating cellular energy metabolism. In response to reduction of intracellular ATP levels, AMPK activates energy-producing pathways and inhibits energy-consuming processes: inhibits protein, carbohydrate and lipid biosynthesis, as well as cell growth and proliferation. AMPK acts via direct phosphorylation of metabolic enzymes, and by longer-term effects via phosphorylation of transcription regulators. Also acts as a regulator of cellular polarity by remodeling the actin cytoskeleton; probably by indirectly activating myosin. Gamma non-catalytic subunit mediates binding to AMP, ADP and ATP, leading to activate or inhibit AMPK: AMP-binding results in allosteric activation of alpha catalytic subunit (PRKAA1 or PRKAA2) both by inducing phosphorylation and preventing dephosphorylation of catalytic subunits. ADP also stimulates phosphorylation, without stimulating already phosphorylated catalytic subunit. ATP promotes dephosphorylation of catalytic subunit, rendering the AMPK enzyme inactive. In Mus musculus (Mouse), this protein is 5'-AMP-activated protein kinase subunit gamma-1 (Prkag1).